The primary structure comprises 111 residues: Small ribosomal subunit protein bS6 (111 aa).

The protein belongs to the bacterial ribosomal protein bS6 family.

Binds together with bS18 to 16S ribosomal RNA. In Francisella tularensis subsp. tularensis (strain FSC 198), this protein is Small ribosomal subunit protein bS6.